A 660-amino-acid chain; its full sequence is ATP-dependent zinc metalloprotease FtsH (660 aa).

The disordered stretch occupies residues 1-20 (MMPSSQRPSPRGSRQSPSPD). The Cytoplasmic segment spans residues 1 to 24 (MMPSSQRPSPRGSRQSPSPDQRGR). Residues 25–45 (IAFAILATLVVAVLLLTLFSH) traverse the membrane as a helical segment. Over 46–118 (APSGQPLGYS…VQVSYITPGP (73 aa)) the chain is Extracellular. Residues 119–139 (GIASTIIEYVIFFGIFIGIWV) form a helical membrane-spanning segment. Over 140–660 (YLTRRTQGSV…ASHDDTDPVS (521 aa)) the chain is Cytoplasmic. An ATP-binding site is contributed by 213 to 220 (GPPGTGKT). Residue histidine 435 participates in Zn(2+) binding. Residue glutamate 436 is part of the active site. Histidine 439 and aspartate 511 together coordinate Zn(2+).

The protein in the central section; belongs to the AAA ATPase family. This sequence in the C-terminal section; belongs to the peptidase M41 family. In terms of assembly, homohexamer. It depends on Zn(2+) as a cofactor.

The protein resides in the cell membrane. In terms of biological role, acts as a processive, ATP-dependent zinc metallopeptidase for both cytoplasmic and membrane proteins. Plays a role in the quality control of integral membrane proteins. In Acidimicrobium ferrooxidans (strain DSM 10331 / JCM 15462 / NBRC 103882 / ICP), this protein is ATP-dependent zinc metalloprotease FtsH.